The following is a 186-amino-acid chain: FMN-dependent NADH:quinone oxidoreductase 1 (186 aa).

FMN is bound by residues 15 to 17 (SVS) and 81 to 84 (MYNF).

The protein belongs to the azoreductase type 1 family. As to quaternary structure, homodimer. FMN serves as cofactor.

The enzyme catalyses 2 a quinone + NADH + H(+) = 2 a 1,4-benzosemiquinone + NAD(+). It carries out the reaction N,N-dimethyl-1,4-phenylenediamine + anthranilate + 2 NAD(+) = 2-(4-dimethylaminophenyl)diazenylbenzoate + 2 NADH + 2 H(+). In terms of biological role, quinone reductase that provides resistance to thiol-specific stress caused by electrophilic quinones. Functionally, also exhibits azoreductase activity. Catalyzes the reductive cleavage of the azo bond in aromatic azo compounds to the corresponding amines. This chain is FMN-dependent NADH:quinone oxidoreductase 1, found in Idiomarina loihiensis (strain ATCC BAA-735 / DSM 15497 / L2-TR).